Consider the following 911-residue polypeptide: Androgen receptor (911 aa).

The interval 1–549 (MEVQLGLGRV…PIDYYFPPQK (549 aa)) is modulating. The segment at 1–578 (MEVQLGLGRV…GSCKVFFKRA (578 aa)) is interaction with ZNF318. Disordered stretches follow at residues 35 to 164 (QNPG…LSLL) and 192 to 225 (QQQQQEAVSEGSSSGRAREASGAPTSSKDNYLGG). Positions 44–88 (AASAAPPGASLLLQQQQQQQQQQQQQQQQQQQQQQETSPRQQQQQ) are enriched in low complexity. Phosphoserine; by CDK9 is present on Ser-81. Residue Ser-93 is modified to Phosphoserine. Residues 192 to 214 (QQQQQEAVSEGSSSGRAREASGA) show a composition bias toward low complexity. Positions 215–225 (PTSSKDNYLGG) are enriched in polar residues. Tyr-222 bears the Phosphotyrosine; by CSK mark. Phosphoserine is present on Ser-255. Tyr-266 bears the Phosphotyrosine; by CSK and TNK2 mark. 4 positions are modified to phosphotyrosine; by CSK: Tyr-306, Tyr-345, Tyr-356, and Tyr-361. Tyr-362 carries the phosphotyrosine; by CSK and TNK2 modification. A Glycyl lysine isopeptide (Lys-Gly) (interchain with G-Cter in SUMO) cross-link involves residue Lys-385. Tyr-392 carries the phosphotyrosine; by CSK modification. Residue Lys-512 forms a Glycyl lysine isopeptide (Lys-Gly) (interchain with G-Cter in SUMO) linkage. 2 positions are modified to phosphotyrosine; by CSK: Tyr-526 and Tyr-543. Residues 543–910 (YYFPPQKTCL…GKVKPIYFHT (368 aa)) form an interaction with LPXN region. 2 consecutive NR C4-type zinc fingers follow at residues 551-571 (CLICGDEASGCHYGALTCGSC) and 587-611 (CASRNDCTIDKFRRKNCPSCRLRKC). Positions 551-623 (CLICGDEASG…AGMTLGARKL (73 aa)) form a DNA-binding region, nuclear receptor. Residues 563-653 (YGALTCGSCK…TEETTQKLTV (91 aa)) are interaction with HIPK3. The interval 583-910 (QKYLCASRND…GKVKPIYFHT (328 aa)) is interaction with CCAR1. Positions 616–910 (MTLGARKLKK…GKVKPIYFHT (295 aa)) are interaction with KAT7. Residue Ser-642 is modified to Phosphoserine; by STK4/MST1. In terms of domain architecture, NR LBD spans 660-891 (ECQPIFLNVL…DFPEMMAEII (232 aa)). Residues Asn-697 and Arg-744 each contribute to the 17beta-hydroxy-5alpha-androstan-3-one site. Residues Lys-837 and Lys-839 each participate in a glycyl lysine isopeptide (Lys-Gly) (interchain with G-Cter in ubiquitin) cross-link. Thr-869 contributes to the 17beta-hydroxy-5alpha-androstan-3-one binding site. Tyr-907 is modified (phosphotyrosine; by CSK).

Belongs to the nuclear hormone receptor family. NR3 subfamily. Binds DNA as a homodimer. Part of a ternary complex containing AR, EFCAB6/DJBP and PARK7. Interacts with HIPK3 and NR0B2 in the presence of androgen. The ligand binding domain interacts with KAT7/HBO1 in the presence of dihydrotestosterone. Interacts with EFCAB6/DJBP, PQBP1, RANBP9, RBAK, SPDEF, SRA1, TGFB1I1 and RREB1. Interacts with ZMIZ1/ZIMP10 and ZMIZ2/ZMIP7 which both enhance its transactivation activity. Interacts with SLC30A9 and RAD54L2/ARIP4. Interacts with MACROD1 (via macro domain). Interacts via the ligand-binding domain with LXXLL and FXXLF motifs from NCOA1, NCOA2, NCOA3 and MAGEA11. Interacts (via nuclear receptor DNA binding domain and nuclear receptor ligand binding domain) with NCOA4. The AR N-terminal poly-Gln region binds Ran resulting in enhancement of AR-mediated transactivation. Ran-binding decreases as the poly-Gln length increases. Interacts with HIP1 (via coiled coil domain). Interacts (via ligand-binding domain) with TRIM68. Interacts with TNK2. Interacts with USP26. Interacts with RNF6. Interacts (regulated by RNF6 probably through polyubiquitination) with RNF14; regulates AR transcriptional activity. Interacts with PRMT2 and TRIM24. Interacts with RACK1. Interacts with RANBP10; this interaction enhances dihydrotestosterone-induced AR transcriptional activity. Interacts with PRPF6 in a hormone-independent way; this interaction enhances dihydrotestosterone-induced AR transcriptional activity. Interacts with STK4/MST1. Interacts with ZIPK/DAPK3. Interacts with LPXN. Interacts with MAK. Part of a complex containing AR, MAK and NCOA3. Interacts with CRY1. Interacts with CCAR1 and GATA2. Interacts with ZNF318. Interacts with BUD31. Interacts with ARID4A. Interacts with ARID4B. Interacts (via NR LBD domain) with ZBTB7A; the interaction is direct and androgen-dependent. Interacts with NCOR1. Interacts with NCOR2. Interacts with CRY2 in a ligand-dependent manner. Post-translationally, phosphorylated in prostate cancer cells in response to several growth factors including EGF. Phosphorylation is induced by c-Src kinase (CSK). Tyr-526 is one of the major phosphorylation sites and an increase in phosphorylation and Src kinase activity is associated with prostate cancer progression. Phosphorylation by TNK2 enhances the DNA-binding and transcriptional activity. Phosphorylation at Ser-81 by CDK9 regulates AR promoter selectivity and cell growth. Sumoylated on Lys-385 (major) and Lys-512. Ubiquitinated. Deubiquitinated by USP26. 'Lys-6' and 'Lys-27'-linked polyubiquitination by RNF6 modulates AR transcriptional activity and specificity. In terms of processing, palmitoylated by ZDHHC7 and ZDHHC21. Palmitoylation is required for plasma membrane targeting and for rapid intracellular signaling via ERK and AKT kinases and cAMP generation.

Its subcellular location is the nucleus. It is found in the cytoplasm. Steroid hormone receptors are ligand-activated transcription factors that regulate eukaryotic gene expression and affect cellular proliferation and differentiation in target tissues. Transcription factor activity is modulated by bound coactivator and corepressor proteins like ZBTB7A that recruits NCOR1 and NCOR2 to the androgen response elements/ARE on target genes, negatively regulating androgen receptor signaling and androgen-induced cell proliferation. Transcription activation is also down-regulated by NR0B2. Activated, but not phosphorylated, by HIPK3 and ZIPK/DAPK3. This chain is Androgen receptor (AR), found in Pan troglodytes (Chimpanzee).